Here is a 401-residue protein sequence, read N- to C-terminus: Adaptive-response sensory kinase SasA (401 aa).

The Histidine kinase domain maps to 175-400 (MLVHDLRNPL…WFHFTLPVYP (226 aa)). The residue at position 178 (H178) is a Phosphohistidine; by autocatalysis.

As to quaternary structure, homooligomerizes. Interacts with KaiC. Participates in the KaiABC clock complex, whose core is composed of a KaiC homohexamer, 6 KaiB and up to 6 KaiA dimers. SasA and KaiB(fs) compete to bind to KaiC.

The catalysed reaction is ATP + protein L-histidine = ADP + protein N-phospho-L-histidine.. In terms of biological role, member of the two-component regulatory system SasA/RpaA involved in genome-wide circadian gene expression. One of several clock output pathways. Participates in the Kai clock protein complex, the main circadian regulator in cyanobacteria, via its interaction with KaiC. KaiC enhances the autophosphorylation activity of SasA, which then transfers its phosphate group to RpaA to activate it. In addition to its output function, recruits fold-shifted KaiB (KaiB(fs)) to KaiC to cooperatively form the KaiB(6):KaiC(6) complex (independent of SasA kinase activity). Required for robustness of the circadian rhythm of gene expression and is involved in clock output, also required for adaptation to light/dark cycles. The chain is Adaptive-response sensory kinase SasA from Trichormus variabilis (strain ATCC 29413 / PCC 7937) (Anabaena variabilis).